We begin with the raw amino-acid sequence, 714 residues long: MSDLVYQWLESANLQQYYPAFEQQGITPQRFITITIQDYGALGIQALPDKQKLFRLITTLKSRENILEQQPSAPNTGATPQSVPSSHVSPHVAQGDRFVGDKQKQNDIQQAQDMSLYESYDGGYEPPYVSAQGSGPANGDDYVIPTIPYHPNAPNPPNPRGIPTVNRTVVPPVDLFLNQIQSRIRVVIRKRPINPKELSQNQRDVVTADGWNQVSIHEPKVKVDLTKYTDLHTFKFDHVFNEQSDNQEIYQYAAKPLIRSVFEGKNCTVFAYGQTGSGKSFTMMHKDNGIYVLACFDILEYLRVYNGSQGNNSKFLVPVVSFFEIYGGKLFDLLNNRQRLQALEDGKGNVQITGLTEKQISSVDAMLNLIDSGLTLRAVGATGANADSSRSHAILQIALKYTKSGKEYSRISFIDLAGSERASDVQNSDRQTRMEGAEINKSLLALKECIRAMDKSNDSKSGAHIPFRGSKLTMVLRDSFIGNSQTVMIANISPNDKSCDNTLNTLRYADRVKELQHGKGGIIKFNVLKMGQNAADVILGTARDDENDVYKAGIVGVNAAPSQQARVPPASQAPITARQIQQNLPQPHYNPNYNPPNSKPAFEPRVETTDEDDMVRTHCDLVDSIYEQEDLIVRAHRRQVDSMMQLVKEEVALLHAIENDQVSIDDWLVKLSDILSRKEEAITTLKGNLSAFKQALQKEEELSHSIDLNKARKK.

The region spanning 1 to 63 is the SAM domain; that stretch reads MSDLVYQWLE…FRLITTLKSR (63 aa). Residues 69–81 are compositionally biased toward polar residues; sequence QQPSAPNTGATPQ. 2 disordered regions span residues 69–109 and 122–161; these read QQPS…NDIQ and GGYE…NPRG. Low complexity predominate over residues 82 to 92; the sequence is SVPSSHVSPHV. Pro residues predominate over residues 151–160; it reads PNAPNPPNPR. In terms of domain architecture, Kinesin motor spans 183 to 515; it reads RIRVVIRKRP…LRYADRVKEL (333 aa). 273 to 280 is an ATP binding site; it reads GQTGSGKS.

It belongs to the TRAFAC class myosin-kinesin ATPase superfamily. Kinesin family. KIN-13 subfamily. As to quaternary structure, interacts with PLK. Phosphorylated by PLK.

It is found in the cytoplasm. Its subcellular location is the cytoskeleton. The protein resides in the cell projection. It localises to the cilium. The protein localises to the flagellum. It is found in the flagellum basal body. Its subcellular location is the flagellum axoneme. The protein resides in the spindle. It localises to the chromosome. The protein localises to the centromere. It is found in the kinetochore. Functionally, involved in cell cycle. Involved in formation of flagella, regulation of flagellar length, and formation of median bodies during interphase. Regulates flagellar length in all eight distal flagellar tips by promoting disassembly of the microtubules. Disassembles microtubules at the distal flagellar tips in a length-dependent manner in order to maintain different equilibrium lengths of the four flagellar pairs. Regulates interphase and mitotic microtubule dynamics. Regulates microtubule disassembly dynamics of the dual mitotic spindles and the median body. The protein is Kinesin-like protein KIN-13 of Giardia intestinalis (strain ATCC 50803 / WB clone C6) (Giardia lamblia).